Here is a 377-residue protein sequence, read N- to C-terminus: uncharacterized protein (377 aa).

2 stretches are compositionally biased toward polar residues: residues 1–11 (MSSIQGTSGSS) and 31–43 (PSGQ…AVGK). Disordered regions lie at residues 1–43 (MSSI…AVGK), 109–141 (SSEE…IARN), and 328–377 (SSSP…RGFQ). Over residues 334–345 (EDPRSLRDRLRD) the composition is skewed to basic and acidic residues.

Belongs to the chlamydial CPn_0499/CT_392/TC_0671 family.

This is an uncharacterized protein from Chlamydia trachomatis serovar D (strain ATCC VR-885 / DSM 19411 / UW-3/Cx).